Reading from the N-terminus, the 36-residue chain is Potassium channel toxin alpha-KTx 16.5 (36 aa).

3 cysteine pairs are disulfide-bonded: Cys-7/Cys-28, Cys-13/Cys-33, and Cys-17/Cys-35. The interaction with Ca(2+)-activated K(+) channels stretch occupies residues 26 to 33 (GKCQNKQC).

It belongs to the short scorpion toxin superfamily. Potassium channel inhibitor family. Alpha-KTx 16 subfamily. As to expression, expressed by the venom gland.

The protein resides in the secreted. Augments responses to direct muscle stimulation probably by blocking calcium-activated potassium channels. The chain is Potassium channel toxin alpha-KTx 16.5 from Leiurus hebraeus (Hebrew deathstalker scorpion).